Here is a 289-residue protein sequence, read N- to C-terminus: ATP synthase gamma chain (289 aa).

The protein belongs to the ATPase gamma chain family. As to quaternary structure, F-type ATPases have 2 components, CF(1) - the catalytic core - and CF(0) - the membrane proton channel. CF(1) has five subunits: alpha(3), beta(3), gamma(1), delta(1), epsilon(1). CF(0) has three main subunits: a, b and c.

It is found in the cell inner membrane. Functionally, produces ATP from ADP in the presence of a proton gradient across the membrane. The gamma chain is believed to be important in regulating ATPase activity and the flow of protons through the CF(0) complex. This chain is ATP synthase gamma chain, found in Haemophilus influenzae (strain ATCC 51907 / DSM 11121 / KW20 / Rd).